Reading from the N-terminus, the 664-residue chain is DNA ligase (664 aa).

Residues 32–36 (DAEYD), 81–82 (SL), and Glu113 each bind NAD(+). Catalysis depends on Lys115, which acts as the N6-AMP-lysine intermediate. Arg136, Glu173, Lys289, and Lys313 together coordinate NAD(+). The Zn(2+) site is built by Cys407, Cys410, Cys425, and Cys431. The region spanning 586-664 (ASEQPFAGKT…EEQLQAALQS (79 aa)) is the BRCT domain.

Belongs to the NAD-dependent DNA ligase family. LigA subfamily. Mg(2+) is required as a cofactor. Mn(2+) serves as cofactor.

The catalysed reaction is NAD(+) + (deoxyribonucleotide)n-3'-hydroxyl + 5'-phospho-(deoxyribonucleotide)m = (deoxyribonucleotide)n+m + AMP + beta-nicotinamide D-nucleotide.. Its function is as follows. DNA ligase that catalyzes the formation of phosphodiester linkages between 5'-phosphoryl and 3'-hydroxyl groups in double-stranded DNA using NAD as a coenzyme and as the energy source for the reaction. It is essential for DNA replication and repair of damaged DNA. This chain is DNA ligase, found in Aeromonas salmonicida (strain A449).